We begin with the raw amino-acid sequence, 143 residues long: Hemoglobin-1 (143 aa).

Position 2 is an N-acetylserine (serine 2). A Globin domain is found at 2–143 (SLSAAQKDNV…ALMGMIRPNM (142 aa)). Histidine 97 serves as a coordination point for heme b.

The protein belongs to the globin family. Monomer.

It localises to the cytoplasm. Serves to transport hydrogen sulfide to autotrophic bacteria. This Phacoides pectinatus (Thick lucine) protein is Hemoglobin-1.